Here is a 412-residue protein sequence, read N- to C-terminus: Transforming growth factor beta-2 proprotein (412 aa).

The signal sequence occupies residues 1 to 20 (MHCYLLSVFLTLDLAAVALS). Residues N72, N139, and N240 are each glycosylated (N-linked (GlcNAc...) asparagine). Cystine bridges form between C307-C316, C315-C378, C344-C409, and C348-C411.

This sequence belongs to the TGF-beta family. As to quaternary structure, interacts with Transforming growth factor beta-2 (TGF-beta-2) chain; interaction is non-covalent and maintains (TGF-beta-2) in a latent state. Homodimer; disulfide-linked. Interacts with TGF-beta receptors (TGFBR1 and TGFBR2), leading to signal transduction. Post-translationally, the precursor proprotein is cleaved in the Golgi apparatus to form Transforming growth factor beta-2 (TGF-beta-2) and Latency-associated peptide (LAP) chains, which remain non-covalently linked, rendering TGF-beta-2 inactive.

It localises to the secreted. Its subcellular location is the extracellular space. The protein localises to the extracellular matrix. Its function is as follows. Precursor of the Latency-associated peptide (LAP) and Transforming growth factor beta-2 (TGF-beta-2) chains, which constitute the regulatory and active subunit of TGF-beta-2, respectively. Required to maintain the Transforming growth factor beta-2 (TGF-beta-2) chain in a latent state during storage in extracellular matrix. Associates non-covalently with TGF-beta-2 and regulates its activation via interaction with 'milieu molecules', such as LTBP1 and LRRC32/GARP, that control activation of TGF-beta-2. In terms of biological role, multifunctional protein that regulates various processes such as angiogenesis and heart development. Activation into mature form follows different steps: following cleavage of the proprotein in the Golgi apparatus, Latency-associated peptide (LAP) and Transforming growth factor beta-2 (TGF-beta-2) chains remain non-covalently linked rendering TGF-beta-2 inactive during storage in extracellular matrix. At the same time, LAP chain interacts with 'milieu molecules', such as LTBP1 and LRRC32/GARP, that control activation of TGF-beta-2 and maintain it in a latent state during storage in extracellular milieus. Once activated following release of LAP, TGF-beta-2 acts by binding to TGF-beta receptors (TGFBR1 and TGFBR2), which transduce signal. This Gallus gallus (Chicken) protein is Transforming growth factor beta-2 proprotein (TGFB2).